Reading from the N-terminus, the 1342-residue chain is DNA-directed RNA polymerase subunit beta (1342 aa).

The protein belongs to the RNA polymerase beta chain family. In terms of assembly, the RNAP catalytic core consists of 2 alpha, 1 beta, 1 beta' and 1 omega subunit. When a sigma factor is associated with the core the holoenzyme is formed, which can initiate transcription.

The catalysed reaction is RNA(n) + a ribonucleoside 5'-triphosphate = RNA(n+1) + diphosphate. In terms of biological role, DNA-dependent RNA polymerase catalyzes the transcription of DNA into RNA using the four ribonucleoside triphosphates as substrates. The protein is DNA-directed RNA polymerase subunit beta of Salmonella gallinarum (strain 287/91 / NCTC 13346).